Reading from the N-terminus, the 858-residue chain is Lysine-specific demethylase JMJ706 (858 aa).

Positions 103–144 constitute a JmjN domain; the sequence is CPVYYPTKEEFEDPIGYIQKIAPVASKYGICKIVSPVSASVP. Positions 250 to 420 constitute a JmjC domain; the sequence is KSNWNLKNFS…LGSVASRRYA (171 aa). Positions 293, 295, and 388 each coordinate Fe cation. Residues 737–746 are compositionally biased toward basic and acidic residues; sequence QHNKRPEDYG. 2 disordered regions span residues 737 to 791 and 829 to 858; these read QHNK…SAKQ and SSST…WPAI. A compositionally biased stretch (polar residues) spans 829-844; sequence SSSTNRVVEQGSSGQR.

It depends on Fe(2+) as a cofactor.

Its subcellular location is the nucleus. It catalyses the reaction N(6),N(6),N(6)-trimethyl-L-lysyl(9)-[histone H3] + 2 2-oxoglutarate + 2 O2 = N(6)-methyl-L-lysyl(9)-[histone H3] + 2 formaldehyde + 2 succinate + 2 CO2. Its function is as follows. Histone demethylase that demethylates 'Lys-9' (H3K9me) of histone H3 with a specific activity for H3K9me3 and H3K9me2. No activity on H3K4me3, H3K9me1, H3K27me2 and H3K36me3/2. Involved in the control of floral organ development by demethylating H3K9me3 and H3K9me2 in the promoter regions of DH1 and MADS47. The 'Lys-9' demethylation of these two genes is required for induction of their expression. This Oryza sativa subsp. japonica (Rice) protein is Lysine-specific demethylase JMJ706 (JMJ706).